The sequence spans 441 residues: 2-oxoisovalerate dehydrogenase subunit alpha, mitochondrial (441 aa).

The transit peptide at 1 to 17 (MISQSYRILSRISRNNE) directs the protein to the mitochondrion. 145–147 (QYR) contributes to the thiamine diphosphate binding site. K(+) contacts are provided by Ser-194, Thr-199, and Gln-200.

The protein belongs to the BCKDHA family. As to quaternary structure, heterotetramer of alpha and beta chains. Thiamine diphosphate serves as cofactor.

Its subcellular location is the mitochondrion matrix. The catalysed reaction is N(6)-[(R)-lipoyl]-L-lysyl-[protein] + 3-methyl-2-oxobutanoate + H(+) = N(6)-[(R)-S(8)-2-methylpropanoyldihydrolipoyl]-L-lysyl-[protein] + CO2. Its function is as follows. The branched-chain alpha-keto dehydrogenase complex catalyzes the overall conversion of alpha-keto acids to acyl-CoA and CO(2). It contains multiple copies of three enzymatic components: branched-chain alpha-keto acid decarboxylase (E1), lipoamide acyltransferase (E2) and lipoamide dehydrogenase (E3). In Dictyostelium discoideum (Social amoeba), this protein is 2-oxoisovalerate dehydrogenase subunit alpha, mitochondrial (bkdA).